The primary structure comprises 423 residues: Probable electron transfer flavoprotein-quinone oxidoreductase YgcN (423 aa).

I7 to L21 lines the FAD pocket.

This sequence belongs to the ETF-QO/FixC family. FAD serves as cofactor.

Its function is as follows. Probably accepts electrons from YgcQ/YgcR and reduces a quinone. The protein is Probable electron transfer flavoprotein-quinone oxidoreductase YgcN (ygcN) of Escherichia coli (strain K12).